Here is a 469-residue protein sequence, read N- to C-terminus: Serine hydroxymethyltransferase, cytosolic (469 aa).

Threonine 20 carries the post-translational modification Phosphothreonine. Residue serine 26 is modified to Phosphoserine. Lysine 248 is modified (N6-(pyridoxal phosphate)lysine). Serine 429 carries the phosphoserine modification. Residue lysine 456 forms a Glycyl lysine isopeptide (Lys-Gly) (interchain with G-Cter in ubiquitin) linkage.

The protein belongs to the SHMT family. As to quaternary structure, homotetramer. Requires pyridoxal 5'-phosphate as cofactor.

The protein localises to the cytoplasm. The catalysed reaction is (6R)-5,10-methylene-5,6,7,8-tetrahydrofolate + glycine + H2O = (6S)-5,6,7,8-tetrahydrofolate + L-serine. Its pathway is one-carbon metabolism; tetrahydrofolate interconversion. Functionally, interconversion of serine and glycine. This chain is Serine hydroxymethyltransferase, cytosolic, found in Saccharomyces cerevisiae (strain ATCC 204508 / S288c) (Baker's yeast).